The chain runs to 338 residues: 4-hydroxy-3-methylbut-2-enyl diphosphate reductase (338 aa).

Cysteine 21 lines the [4Fe-4S] cluster pocket. 2 residues coordinate (2E)-4-hydroxy-3-methylbut-2-enyl diphosphate: histidine 50 and histidine 83. Histidine 50 and histidine 83 together coordinate dimethylallyl diphosphate. 2 residues coordinate isopentenyl diphosphate: histidine 50 and histidine 83. Residue cysteine 105 coordinates [4Fe-4S] cluster. Histidine 133 contributes to the (2E)-4-hydroxy-3-methylbut-2-enyl diphosphate binding site. Histidine 133 contributes to the dimethylallyl diphosphate binding site. Histidine 133 serves as a coordination point for isopentenyl diphosphate. Catalysis depends on glutamate 135, which acts as the Proton donor. Threonine 173 contacts (2E)-4-hydroxy-3-methylbut-2-enyl diphosphate. Position 203 (cysteine 203) interacts with [4Fe-4S] cluster. (2E)-4-hydroxy-3-methylbut-2-enyl diphosphate-binding residues include serine 231, serine 232, asparagine 233, and serine 276. The dimethylallyl diphosphate site is built by serine 231, serine 232, asparagine 233, and serine 276. Isopentenyl diphosphate contacts are provided by serine 231, serine 232, asparagine 233, and serine 276.

The protein belongs to the IspH family. [4Fe-4S] cluster is required as a cofactor.

The enzyme catalyses isopentenyl diphosphate + 2 oxidized [2Fe-2S]-[ferredoxin] + H2O = (2E)-4-hydroxy-3-methylbut-2-enyl diphosphate + 2 reduced [2Fe-2S]-[ferredoxin] + 2 H(+). The catalysed reaction is dimethylallyl diphosphate + 2 oxidized [2Fe-2S]-[ferredoxin] + H2O = (2E)-4-hydroxy-3-methylbut-2-enyl diphosphate + 2 reduced [2Fe-2S]-[ferredoxin] + 2 H(+). It functions in the pathway isoprenoid biosynthesis; dimethylallyl diphosphate biosynthesis; dimethylallyl diphosphate from (2E)-4-hydroxy-3-methylbutenyl diphosphate: step 1/1. The protein operates within isoprenoid biosynthesis; isopentenyl diphosphate biosynthesis via DXP pathway; isopentenyl diphosphate from 1-deoxy-D-xylulose 5-phosphate: step 6/6. Its function is as follows. Catalyzes the conversion of 1-hydroxy-2-methyl-2-(E)-butenyl 4-diphosphate (HMBPP) into a mixture of isopentenyl diphosphate (IPP) and dimethylallyl diphosphate (DMAPP). Acts in the terminal step of the DOXP/MEP pathway for isoprenoid precursor biosynthesis. This is 4-hydroxy-3-methylbut-2-enyl diphosphate reductase from Streptomyces coelicolor (strain ATCC BAA-471 / A3(2) / M145).